Consider the following 168-residue polypeptide: MLQPQETFSNPALRDEDKHLGNLWASKKSLYKNPAHLAQQQDPWSRLSSTPTATSRSRDTFFDSKIPKDDLDFRLATLYNHHTGAFKNKTEILLHQETIEDIQGTKIQFPGECFHAPSAPITSRTTIRHWINPKKESIHSIQGSIVSPHTAATNGGYSRKNDGGFFST.

Disordered regions lie at residues 35–61 and 149–168; these read AHLA…RDTF and HTAA…FFST. The segment covering 38-55 has biased composition (polar residues); the sequence is AQQQDPWSRLSSTPTATS.

Microtubule inner protein component of sperm flagellar doublet microtubules. In terms of tissue distribution, predominantly expressed in nervous system tissues, such as the spinal cord, cerebrum, cerebellum, and sciatic nerve.

It localises to the cytoplasm. The protein localises to the cytoskeleton. Its subcellular location is the cilium axoneme. The protein resides in the flagellum axoneme. Its function is as follows. Microtubule inner protein (MIP) part of the dynein-decorated doublet microtubules (DMTs) in cilia axoneme, which is required for motile cilia beating. May play an important role for the maintenance of myelin-axon integrity. May affect intracellular Ca(2+) homeostasis. The sequence is that of Cilia- and flagella-associated protein 276 from Mus musculus (Mouse).